Consider the following 76-residue polypeptide: MARFFRRRKFCRFTAEDVKEIDYKDLNTLKAYVSETGKIVPSRITGTKARYQRQLATAIKRARFLALLAYTDSHGR.

It belongs to the bacterial ribosomal protein bS18 family. In terms of assembly, part of the 30S ribosomal subunit. Forms a tight heterodimer with protein bS6.

Its function is as follows. Binds as a heterodimer with protein bS6 to the central domain of the 16S rRNA, where it helps stabilize the platform of the 30S subunit. In Pseudomonas fluorescens (strain ATCC BAA-477 / NRRL B-23932 / Pf-5), this protein is Small ribosomal subunit protein bS18.